We begin with the raw amino-acid sequence, 1402 residues long: DNA-directed RNA polymerase subunit beta' (1402 aa).

C71, C73, C86, and C89 together coordinate Zn(2+). The Mg(2+) site is built by D462, D464, and D466. The Zn(2+) site is built by C811, C885, C892, and C895.

This sequence belongs to the RNA polymerase beta' chain family. In terms of assembly, the RNAP catalytic core consists of 2 alpha, 1 beta, 1 beta' and 1 omega subunit. When a sigma factor is associated with the core the holoenzyme is formed, which can initiate transcription. Mg(2+) is required as a cofactor. Requires Zn(2+) as cofactor.

It carries out the reaction RNA(n) + a ribonucleoside 5'-triphosphate = RNA(n+1) + diphosphate. Its function is as follows. DNA-dependent RNA polymerase catalyzes the transcription of DNA into RNA using the four ribonucleoside triphosphates as substrates. The polypeptide is DNA-directed RNA polymerase subunit beta' (Bartonella henselae (strain ATCC 49882 / DSM 28221 / CCUG 30454 / Houston 1) (Rochalimaea henselae)).